We begin with the raw amino-acid sequence, 119 residues long: Beta-2-microglobulin (119 aa).

Residues 1-20 (MGRFVAVALLVLLSLSGLET) form the signal peptide. The Ig-like C1-type domain occupies 25–114 (PKIQVYSRHP…VTFSTPKTVK (90 aa)). Cysteines 45 and 100 form a disulfide.

The protein belongs to the beta-2-microglobulin family. Heterodimer of an alpha chain and a beta chain. Beta-2-microglobulin is the beta-chain of major histocompatibility complex class I molecules.

It is found in the secreted. Functionally, component of the class I major histocompatibility complex (MHC). Involved in the presentation of peptide antigens to the immune system. The sequence is that of Beta-2-microglobulin (B2M) from Callicebus personatus nigrifrons (Black-fronted titi).